A 398-amino-acid polypeptide reads, in one-letter code: MRKRTEPVALEHERRTASGSPSAGPAAAALDADCRLKQNLCLAGPGPAEPRCAADAGMKRALGRRKGLCFRLRKILFFVLGLYVAIPFLIKLCPGIQAKLIFLNFVRVPYFIDLKRPQDQGLNHTCNYYLQPEEDVTIGVWHTVPTVWWKNAQGKDQMWYEDALSSSHPIILYLHGNAGTRGGDHRVELYKVLSSLGYHVVTFDYRGWGDSVGTPSERGMTYDALHVFDWIKVRSGDNPVYIWGHSLGTGVATNLVRRLCERETPPDALILESPFTNIREEAKSHPFSVIYRYFPGFDWFFLDPITSSGIQFANDENVKHISCSLLILHAEDDPVVPFQLGRKLYNIAAPSRSFRDFKVQFIPFHSDLGYRHKYIYKSPELPRILREFLGKSEPGRQH.

Over residues 1–16 the composition is skewed to basic and acidic residues; it reads MRKRTEPVALEHERRT. The interval 1–24 is disordered; sequence MRKRTEPVALEHERRTASGSPSAG. Residues 1–74 are Cytoplasmic-facing; the sequence is MRKRTEPVAL…RKGLCFRLRK (74 aa). A helical transmembrane segment spans residues 75–95; that stretch reads ILFFVLGLYVAIPFLIKLCPG. The Extracellular portion of the chain corresponds to 96–398; it reads IQAKLIFLNF…LGKSEPGRQH (303 aa). An N-linked (GlcNAc...) asparagine glycan is attached at asparagine 123. The active-site Nucleophile is the serine 246. Active-site charge relay system residues include aspartate 333 and histidine 372.

Belongs to the serine esterase family.

It localises to the endoplasmic reticulum membrane. It carries out the reaction 1-(9Z-octadecenoyl)-sn-glycero-3-phospho-L-serine + H2O = sn-glycero-3-phospho-L-serine + (9Z)-octadecenoate + H(+). The enzyme catalyses 1-(9Z-octadecenoyl)-sn-glycero-3-phospho-(1'-sn-glycerol) + H2O = sn-glycero-3-phospho-(1'-sn-glycerol) + (9Z)-octadecenoate + H(+). It catalyses the reaction 1-(9Z-octadecenoyl)-sn-glycero-3-phospho-(1D-myo-inositol) + H2O = sn-glycero-3-phospho-1D-myo-inositol + (9Z)-octadecenoate + H(+). The catalysed reaction is 1-(9Z-octadecenoyl)-sn-glycero-3-phosphoethanolamine + H2O = sn-glycero-3-phosphoethanolamine + (9Z)-octadecenoate + H(+). It carries out the reaction 1-(9Z-octadecenoyl)-sn-glycero-3-phosphocholine + H2O = 1-(9Z-octadecenoyl)-sn-glycerol + phosphocholine + H(+). The enzyme catalyses 2-(9Z-octadecenoyl)-glycerol + H2O = glycerol + (9Z)-octadecenoate + H(+). It catalyses the reaction 1-hexadecanoyl-sn-glycero-3-phospho-L-serine + H2O = sn-glycero-3-phospho-L-serine + hexadecanoate + H(+). The catalysed reaction is 2-(5Z,8Z,11Z,14Z-eicosatetraenoyl)-glycerol + H2O = glycerol + (5Z,8Z,11Z,14Z)-eicosatetraenoate + H(+). It carries out the reaction Hydrolyzes glycerol monoesters of long-chain fatty acids.. The enzyme catalyses 1-decanoylglycerol + H2O = decanoate + glycerol + H(+). It catalyses the reaction 1-dodecanoylglycerol + H2O = dodecanoate + glycerol + H(+). The catalysed reaction is 1-tetradecanoylglycerol + H2O = tetradecanoate + glycerol + H(+). It carries out the reaction 2-hexadecanoylglycerol + H2O = glycerol + hexadecanoate + H(+). The enzyme catalyses 1-(9Z-octadecenoyl)-glycerol + H2O = glycerol + (9Z)-octadecenoate + H(+). It catalyses the reaction 2-(9Z,12Z-octadecadienoyl)-glycerol + H2O = (9Z,12Z)-octadecadienoate + glycerol + H(+). The catalysed reaction is 1-(5Z,8Z,11Z,14Z-eicosatetraenoyl)-glycerol + H2O = glycerol + (5Z,8Z,11Z,14Z)-eicosatetraenoate + H(+). It carries out the reaction 1-(9Z,12Z-octadecadienoyl)-glycerol + H2O = (9Z,12Z)-octadecadienoate + glycerol + H(+). The enzyme catalyses 1-hexadecanoylglycerol + H2O = glycerol + hexadecanoate + H(+). It catalyses the reaction 1-octadecanoylglycerol + H2O = octadecanoate + glycerol + H(+). The catalysed reaction is 1-octadecanoyl-2-(9,10-epoxyoctadecanoyl)-sn-glycero-3-phospho-L-serine + H2O = 9,10-epoxyoctadecanoate + 1-octadecanoyl-sn-glycero-3-phosphoserine + H(+). It carries out the reaction 1-octadecanoyl-2-(10-hydroxyoctadecanoyl)-sn-glycero-3-phospho-L-serine + H2O = 1-octadecanoyl-sn-glycero-3-phosphoserine + 10-hydroxyoctadecanoate + H(+). The enzyme catalyses 1-hexadecanoyl-2-(10-hydroxyoctadecanoyl)-sn-glycero-3-phospho-L-serine + H2O = 10-hydroxyoctadecanoate + 1-hexadecanoyl-sn-glycero-3-phospho-L-serine + H(+). Lysophosphatidylserine (LPS) lipase that mediates the hydrolysis of lysophosphatidylserine, a class of signaling lipids that regulates immunological and neurological processes. Represents a major lysophosphatidylserine lipase in the brain, thereby playing a key role in the central nervous system. Also able to hydrolyze oxidized phosphatidylserine; oxidized phosphatidylserine is produced in response to severe inflammatory stress and constitutes a proapoptotic 'eat me' signal. Also has monoacylglycerol (MAG) lipase activity: hydrolyzes 2-arachidonoylglycerol (2-AG), thereby acting as a regulator of endocannabinoid signaling pathways. Has a strong preference for very-long-chain lipid substrates; substrate specificity is likely due to improved catalysis and not improved substrate binding. This chain is Lysophosphatidylserine lipase ABHD12, found in Bos taurus (Bovine).